We begin with the raw amino-acid sequence, 601 residues long: MDIKDKSLKELEELSSQIRERIIDVVSRKGGHFSSTLGAVELTLGMHYVFDAYSDPFIFDVSHQCYPHKLLTSRWDEFETIRQFGGLSGFTKPKESPADYFVAGHSSTSISLAVGAAKSIKLKKENKVPIVMIGDGSMSAGMVYEALNELGDLKLPVVIILNDNEMSIAKPIGAISKYLSKILAGKYYQSFKSKVDKFIRKNMPEGTTYLAKRFEEAFKLITPGILFEEMGIDYIGPIDGHDLKEVIETLQIAKAMQKPVIVHAHTIKGKGYKIAEGQHEEWHGVGPFNIEDGEFIKKEAPKSATAVFSDALLNLACKYENVVGVTAAMPSGTGINKLMDEFPERFWDVAIAEQHAITSMAAMAKEGFKPFITIYSTFLQRGFDQIIHDVCLMNLPVVFAMDRAGIVGNDGETHQGAFDISFLRFIPNMVLFAPRDNETLEQSLEFAYNLNNPCAIRYPRGAFKKLNFVPTPFVLGKAEILKTGISNKLFIGYGAGVSRAIDTEALHNEDITVVDLRFVKPLDKNLLLELSKKYNDWYIFSDSQKQSGVGSAILEFLNDEKIHNVQLTSFEYNDKFIEHGDTKLVEQSLGLLPEQLVQKIK.

Thiamine diphosphate is bound by residues histidine 63 and glycine 104–serine 106. Aspartate 135 serves as a coordination point for Mg(2+). Thiamine diphosphate-binding positions include glycine 136 to serine 137, asparagine 164, tyrosine 272, and glutamate 353. Asparagine 164 is a Mg(2+) binding site.

This sequence belongs to the transketolase family. DXPS subfamily. Homodimer. It depends on Mg(2+) as a cofactor. The cofactor is thiamine diphosphate.

The catalysed reaction is D-glyceraldehyde 3-phosphate + pyruvate + H(+) = 1-deoxy-D-xylulose 5-phosphate + CO2. The protein operates within metabolic intermediate biosynthesis; 1-deoxy-D-xylulose 5-phosphate biosynthesis; 1-deoxy-D-xylulose 5-phosphate from D-glyceraldehyde 3-phosphate and pyruvate: step 1/1. Its function is as follows. Catalyzes the acyloin condensation reaction between C atoms 2 and 3 of pyruvate and glyceraldehyde 3-phosphate to yield 1-deoxy-D-xylulose-5-phosphate (DXP). In Aliarcobacter butzleri (strain RM4018) (Arcobacter butzleri), this protein is 1-deoxy-D-xylulose-5-phosphate synthase.